The sequence spans 412 residues: MQTLDRPNAPSQQPYPEPVYPRRPTRTVAVGNVLIGSQHPVVVQSMINEDTLDIDAAVAAIRRLHEAGSEIVRVTVPSMAHAKAMEAIRSKLIQTYKPVPLVADVHHNGIKIALEVAQYVDKVRINPGLFVLEKPQPGRTEYTQAELEAIRNKIRETFTPLVQTLKAQNKALRIGVNHGSLAERMLFMYGDTPEGMVESALEYAEICAEQDFHNVVLSFKASRPQVMLAAYRLAARRFDALGLNYPFHLGVTEAGDGEYGRIKSAVGIGTLLAEGIGDTIRVSLTEAPEKEIPVAYGILQALNLRKTMVEYVACPSCGRTLFNLEEVLQKVRAATQHLVGLDIAVMGCIVNGPGEMADADYGYVGKTPGYISLYRGKEEVKKVPESEGVQALIELIKADGRWVDPPEGSPSN.

Positions 1 to 12 are enriched in polar residues; the sequence is MQTLDRPNAPSQ. Positions 1–22 are disordered; that stretch reads MQTLDRPNAPSQQPYPEPVYPR. Residues C314, C317, C348, and E355 each coordinate [4Fe-4S] cluster.

It belongs to the IspG family. The cofactor is [4Fe-4S] cluster.

It catalyses the reaction (2E)-4-hydroxy-3-methylbut-2-enyl diphosphate + 2 oxidized [2Fe-2S]-[ferredoxin] + H2O = 2-C-methyl-D-erythritol 2,4-cyclic diphosphate + 2 reduced [2Fe-2S]-[ferredoxin] + H(+). It participates in isoprenoid biosynthesis; isopentenyl diphosphate biosynthesis via DXP pathway; isopentenyl diphosphate from 1-deoxy-D-xylulose 5-phosphate: step 5/6. Functionally, converts 2C-methyl-D-erythritol 2,4-cyclodiphosphate (ME-2,4cPP) into 1-hydroxy-2-methyl-2-(E)-butenyl 4-diphosphate. The protein is 4-hydroxy-3-methylbut-2-en-1-yl diphosphate synthase (ferredoxin) of Synechococcus sp. (strain JA-3-3Ab) (Cyanobacteria bacterium Yellowstone A-Prime).